The sequence spans 506 residues: D-alanine--D-alanyl carrier protein ligase (506 aa).

152–153 (TS) provides a ligand contact to ATP. Asp-197 contributes to the D-alanine binding site. 292-297 (NTYGPT) lines the ATP pocket. Val-301 is a D-alanine binding site. Residues Asp-383, 395–398 (YRGR), and Lys-494 contribute to the ATP site. D-alanine is bound at residue Lys-494.

The protein belongs to the ATP-dependent AMP-binding enzyme family. DltA subfamily.

It localises to the cytoplasm. It catalyses the reaction holo-[D-alanyl-carrier protein] + D-alanine + ATP = D-alanyl-[D-alanyl-carrier protein] + AMP + diphosphate. Its pathway is cell wall biogenesis; lipoteichoic acid biosynthesis. Its function is as follows. Catalyzes the first step in the D-alanylation of lipoteichoic acid (LTA), the activation of D-alanine and its transfer onto the D-alanyl carrier protein (Dcp) DltC. In an ATP-dependent two-step reaction, forms a high energy D-alanyl-AMP intermediate, followed by transfer of the D-alanyl residue as a thiol ester to the phosphopantheinyl prosthetic group of the Dcp. D-alanylation of LTA plays an important role in modulating the properties of the cell wall in Gram-positive bacteria, influencing the net charge of the cell wall. The sequence is that of D-alanine--D-alanyl carrier protein ligase from Lacticaseibacillus paracasei (strain ATCC 334 / BCRC 17002 / CCUG 31169 / CIP 107868 / KCTC 3260 / NRRL B-441) (Lactobacillus paracasei).